We begin with the raw amino-acid sequence, 193 residues long: Ancillary SecYEG translocon subunit (193 aa).

Residues 1–8 (MLNISKKN) lie on the Cytoplasmic side of the membrane. A helical membrane pass occupies residues 9-29 (IIFFILFFLIISLILFNWKYF). The Periplasmic portion of the chain corresponds to 30-193 (SLVNKENLES…MKLNELKEQN (164 aa)).

Belongs to the YfgM family. Interacts with the SecYEG translocon. Forms a complex with PpiD.

The protein resides in the cell inner membrane. May mediate protein transfer from the SecYEG translocon to the periplasmic chaperone network via its periplasmic C-terminal region. The polypeptide is Ancillary SecYEG translocon subunit (Buchnera aphidicola subsp. Acyrthosiphon pisum (strain APS) (Acyrthosiphon pisum symbiotic bacterium)).